Consider the following 317-residue polypeptide: Tyrosine--tRNA ligase (317 aa).

Residue Tyr-33 coordinates L-tyrosine. Positions Pro-38–His-46 match the 'HIGH' region motif. Residues Tyr-155, Gln-159, Asp-162, and Gln-177 each contribute to the L-tyrosine site. The short motif at Lys-211–Ser-215 is the 'KMSKS' region element. An ATP-binding site is contributed by Ser-214.

It belongs to the class-I aminoacyl-tRNA synthetase family. TyrS type 3 subfamily. As to quaternary structure, homodimer.

The protein resides in the cytoplasm. It catalyses the reaction tRNA(Tyr) + L-tyrosine + ATP = L-tyrosyl-tRNA(Tyr) + AMP + diphosphate + H(+). Its function is as follows. Catalyzes the attachment of tyrosine to tRNA(Tyr) in a two-step reaction: tyrosine is first activated by ATP to form Tyr-AMP and then transferred to the acceptor end of tRNA(Tyr). In Methanosarcina acetivorans (strain ATCC 35395 / DSM 2834 / JCM 12185 / C2A), this protein is Tyrosine--tRNA ligase.